Reading from the N-terminus, the 589-residue chain is Serine/threonine-protein kinase PknJ (589 aa).

Over 1-342 (MAHELSAGSV…LPRRPRRYRR (342 aa)) the chain is Cytoplasmic. The 263-residue stretch at 14–276 (YRIERMLGAG…SAGEFAHAAA (263 aa)) folds into the Protein kinase domain. Residues 20 to 28 (LGAGGMGTV) and K43 contribute to the ATP site. The active-site Proton acceptor is D136. The chain crosses the membrane as a helical span at residues 343–363 (GVAAVAAVMVVAAAAVTAVTM). The Extracellular segment spans residues 364 to 589 (TSHQPRTATP…TNYILAKIPG (226 aa)). The segment covering 365–387 (SHQPRTATPPSAAALSPTSSSTT) has biased composition (low complexity). The segment at 365-400 (SHQPRTATPPSAAALSPTSSSTTPPQPPIVTRSRLP) is disordered.

This sequence belongs to the protein kinase superfamily. Ser/Thr protein kinase family. As to quaternary structure, homodimer.

Its subcellular location is the cell membrane. It catalyses the reaction L-seryl-[protein] + ATP = O-phospho-L-seryl-[protein] + ADP + H(+). The enzyme catalyses L-threonyl-[protein] + ATP = O-phospho-L-threonyl-[protein] + ADP + H(+). This chain is Serine/threonine-protein kinase PknJ (pknJ), found in Mycobacterium bovis (strain ATCC BAA-935 / AF2122/97).